We begin with the raw amino-acid sequence, 373 residues long: D-amino-acid oxidase 3 (373 aa).

The signal sequence occupies residues 1-19 (MVKYDAVILGSGVLGLSIA). Residues S11, L14, D35, A46, S47, G51, and N53 each coordinate FAD. An anthranilate-binding site is contributed by F57. N-linked (GlcNAc...) asparagine glycosylation is present at N180. An intrachain disulfide couples C214 to C271. Anthranilate-binding residues include Y229, Y246, and R296. The (R)-lactate site is built by Y229, Y246, and R296. 5 residues coordinate FAD: R296, G342, G345, Y346, and Q347. Residues 371 to 373 (AKL) carry the Microbody targeting signal motif.

This sequence belongs to the DAMOX/DASOX family. It depends on FAD as a cofactor.

Its subcellular location is the peroxisome matrix. The catalysed reaction is a D-alpha-amino acid + O2 + H2O = a 2-oxocarboxylate + H2O2 + NH4(+). In terms of biological role, catalyzes the oxidative deamination of D-amino acids with broad substrate specificity. Enables the organism to utilize D-amino acids as a source of nutrients. Enables the organism to utilize D-glutamate and D-methionine as a nitrogen source. Protects the organism from the toxicity of D-amino acids, including from D-glutamate. May play a role in its interaction with the host. This Cryptococcus neoformans var. grubii serotype A (strain H99 / ATCC 208821 / CBS 10515 / FGSC 9487) (Filobasidiella neoformans var. grubii) protein is D-amino-acid oxidase 3.